The primary structure comprises 98 residues: Co-chaperonin GroES (98 aa).

A disordered region spans residues 35–57 (EKPQEGKVISAGPGRVDDKGTRV).

This sequence belongs to the GroES chaperonin family. In terms of assembly, heptamer of 7 subunits arranged in a ring. Interacts with the chaperonin GroEL.

The protein localises to the cytoplasm. In terms of biological role, together with the chaperonin GroEL, plays an essential role in assisting protein folding. The GroEL-GroES system forms a nano-cage that allows encapsulation of the non-native substrate proteins and provides a physical environment optimized to promote and accelerate protein folding. GroES binds to the apical surface of the GroEL ring, thereby capping the opening of the GroEL channel. The sequence is that of Co-chaperonin GroES from Cutibacterium acnes (strain DSM 16379 / KPA171202) (Propionibacterium acnes).